A 231-amino-acid polypeptide reads, in one-letter code: NADH-ubiquinone oxidoreductase chain 4 (231 aa).

6 helical membrane passes run 1-21 (PIAGSMVLAAILLKLGGYGII), 34-54 (MFLPFLVLALWGAILANLTCL), 63-85 (IAYSSISHMGLVVAAIIIQTPWG), 89-111 (AMALMVAHGFTSSSLFCLANTTY), 128-148 (ILPMATTWWLLANLLNIATPP), and 156-176 (LLIMSALFNWCPTTIILLGLS).

It belongs to the complex I subunit 4 family.

It localises to the mitochondrion membrane. The enzyme catalyses a ubiquinone + NADH + 5 H(+)(in) = a ubiquinol + NAD(+) + 4 H(+)(out). Functionally, core subunit of the mitochondrial membrane respiratory chain NADH dehydrogenase (Complex I) that is believed to belong to the minimal assembly required for catalysis. Complex I functions in the transfer of electrons from NADH to the respiratory chain. The immediate electron acceptor for the enzyme is believed to be ubiquinone. The protein is NADH-ubiquinone oxidoreductase chain 4 (MT-ND4) of Bothriechis lateralis (Side-striped palm pitviper).